The sequence spans 391 residues: Ferrochelatase (391 aa).

His196 and Glu281 together coordinate Fe cation.

It belongs to the ferrochelatase family.

The protein localises to the cytoplasm. It catalyses the reaction heme b + 2 H(+) = protoporphyrin IX + Fe(2+). It functions in the pathway porphyrin-containing compound metabolism; protoheme biosynthesis; protoheme from protoporphyrin-IX: step 1/1. Functionally, catalyzes the ferrous insertion into protoporphyrin IX. The protein is Ferrochelatase of Synechococcus sp. (strain CC9605).